Reading from the N-terminus, the 545-residue chain is T-complex protein 1 subunit gamma (545 aa).

Position 1 is an N-acetylmethionine (Met1). The disordered stretch occupies residues 1 to 24; that stretch reads MMGHRPVLVLSQNTKRESGRKVQS. Ser11 is subject to Phosphoserine. Lys15 participates in a covalent cross-link: Glycyl lysine isopeptide (Lys-Gly) (interchain with G-Cter in SUMO2). ADP is bound at residue Gly42. Gly42 provides a ligand contact to ATP. A Mg(2+)-binding site is contributed by Asp93. The ADP site is built by Gly94, Thr95, Thr96, Ser97, Thr162, and Lys163. The ATP site is built by Gly94, Thr95, and Thr96. Position 170 is a phosphoserine (Ser170). Position 222 is an N6-acetyllysine (Lys222). 2 positions are modified to phosphoserine: Ser243 and Ser244. Residue Tyr247 is modified to Phosphotyrosine. Residues Lys248 and Lys249 each participate in a glycyl lysine isopeptide (Lys-Gly) (interchain with G-Cter in SUMO2) cross-link. Residue Ser252 is modified to Phosphoserine. An intrachain disulfide couples Cys366 to Cys372. Lys381 is covalently cross-linked (Glycyl lysine isopeptide (Lys-Gly) (interchain with G-Cter in SUMO2)). Gly411 serves as a coordination point for ADP. Position 411 (Gly411) interacts with ATP. Thr430 and Thr459 each carry phosphothreonine. The ADP site is built by Gly482, Glu483, Glu497, and Lys502. Gly482 is a binding site for ATP. Glu497 contributes to the ATP binding site. Residues 526–545 are disordered; sequence HKKKGDDQNRQTGAPDAGQE.

Belongs to the TCP-1 chaperonin family. Component of the chaperonin-containing T-complex (TRiC), a hexadecamer composed of two identical back-to-back stacked rings enclosing a protein folding chamber. Each ring is made up of eight different subunits: TCP1/CCT1, CCT2, CCT3, CCT4, CCT5, CCT6A/CCT6, CCT7, CCT8. Interacts with PACRG. Interacts with DNAAF4. Interacts with DLEC1. In terms of processing, the N-terminus is blocked.

It localises to the cytoplasm. It catalyses the reaction ATP + H2O = ADP + phosphate + H(+). Component of the chaperonin-containing T-complex (TRiC), a molecular chaperone complex that assists the folding of actin, tubulin and other proteins upon ATP hydrolysis. The TRiC complex mediates the folding of WRAP53/TCAB1, thereby regulating telomere maintenance. As part of the TRiC complex may play a role in the assembly of BBSome, a complex involved in ciliogenesis regulating transports vesicles to the cilia. The protein is T-complex protein 1 subunit gamma (Cct3) of Mus musculus (Mouse).